The sequence spans 112 residues: Protein SMALL AUXIN UP-REGULATED RNA 10 (112 aa).

The protein belongs to the ARG7 family. In terms of tissue distribution, confined to the veins and petioles of rosette leaves and cauline leaves, and specifically expressed at the abaxial side of inflorescence branche; relocates to both the adaxial (Ad) and abaxial (Ab) sides of the branch in reduced red:far-red (R:FR) light, during shade. Also present in flowers.

The protein localises to the cell membrane. Provide a mechanistic link between auxin and plasma membrane H(+)-ATPases (PM H(+)-ATPases, e.g. AHA1 and AHA2), and triggers PM H(+)-ATPases activity by promoting phosphorylation of their C-terminal autoinhibitory domain as a result of PP2C-D subfamily of type 2C phosphatases inhibition, thus leading to the acidification of the apoplast and the facilitation of solutes and water uptake to drive cell expansion. Triggers plant growth probably by promoting cell elongation. Regulates branch angles and bending. The sequence is that of Protein SMALL AUXIN UP-REGULATED RNA 10 from Arabidopsis thaliana (Mouse-ear cress).